The primary structure comprises 261 residues: Phosphate import ATP-binding protein PstB 1 (261 aa).

Residues 8–256 (IKVNNLSFYY…PHDSRTREYV (249 aa)) form the ABC transporter domain. Residue 40 to 47 (GPSGCGKS) participates in ATP binding.

This sequence belongs to the ABC transporter superfamily. Phosphate importer (TC 3.A.1.7) family. In terms of assembly, the complex is composed of two ATP-binding proteins (PstB), two transmembrane proteins (PstC and PstA) and a solute-binding protein (PstS).

It localises to the cell inner membrane. The catalysed reaction is phosphate(out) + ATP + H2O = ADP + 2 phosphate(in) + H(+). Functionally, part of the ABC transporter complex PstSACB involved in phosphate import. Responsible for energy coupling to the transport system. The protein is Phosphate import ATP-binding protein PstB 1 of Nostoc sp. (strain PCC 7120 / SAG 25.82 / UTEX 2576).